A 584-amino-acid chain; its full sequence is Arginine--tRNA ligase (584 aa).

The 'HIGH' region signature appears at 126–136 (PNIAKEMHVGH).

Belongs to the class-I aminoacyl-tRNA synthetase family. Monomer.

The protein resides in the cytoplasm. The catalysed reaction is tRNA(Arg) + L-arginine + ATP = L-arginyl-tRNA(Arg) + AMP + diphosphate. This Nostoc punctiforme (strain ATCC 29133 / PCC 73102) protein is Arginine--tRNA ligase.